The following is a 193-amino-acid chain: Oligoribonuclease (193 aa).

Positions 20–183 (FVWLDCEMTG…ADVHESIEEL (164 aa)) constitute an Exonuclease domain. Y141 is an active-site residue.

It belongs to the oligoribonuclease family.

It localises to the cytoplasm. Functionally, 3'-to-5' exoribonuclease specific for small oligoribonucleotides. The sequence is that of Oligoribonuclease from Paracidovorax citrulli (strain AAC00-1) (Acidovorax citrulli).